The sequence spans 127 residues: Small integral membrane protein 33 (127 aa).

Asn15 carries N-linked (GlcNAc...) asparagine glycosylation. A helical transmembrane segment spans residues 38 to 58; that stretch reads PLLAAIIAAFVLLAICIVLAV.

Its subcellular location is the membrane. The polypeptide is Small integral membrane protein 33 (Mus musculus (Mouse)).